A 134-amino-acid polypeptide reads, in one-letter code: Large-conductance mechanosensitive channel (134 aa).

The next 2 membrane-spanning stretches (helical) occupy residues V16–L36 and I84–I104.

The protein belongs to the MscL family. Homopentamer.

Its subcellular location is the cell inner membrane. Channel that opens in response to stretch forces in the membrane lipid bilayer. May participate in the regulation of osmotic pressure changes within the cell. The protein is Large-conductance mechanosensitive channel of Stenotrophomonas maltophilia (strain R551-3).